The following is a 314-amino-acid chain: 4-hydroxy-3-methylbut-2-enyl diphosphate reductase (314 aa).

Position 12 (Cys12) interacts with [4Fe-4S] cluster. (2E)-4-hydroxy-3-methylbut-2-enyl diphosphate is bound by residues His41 and His74. Dimethylallyl diphosphate is bound by residues His41 and His74. Isopentenyl diphosphate-binding residues include His41 and His74. Cys96 lines the [4Fe-4S] cluster pocket. Position 124 (His124) interacts with (2E)-4-hydroxy-3-methylbut-2-enyl diphosphate. Residue His124 participates in dimethylallyl diphosphate binding. Residue His124 participates in isopentenyl diphosphate binding. Glu126 serves as the catalytic Proton donor. Thr167 contributes to the (2E)-4-hydroxy-3-methylbut-2-enyl diphosphate binding site. Cys197 provides a ligand contact to [4Fe-4S] cluster. Residues Ser225, Ser226, Asn227, and Ser269 each coordinate (2E)-4-hydroxy-3-methylbut-2-enyl diphosphate. The dimethylallyl diphosphate site is built by Ser225, Ser226, Asn227, and Ser269. Ser225, Ser226, Asn227, and Ser269 together coordinate isopentenyl diphosphate.

It belongs to the IspH family. [4Fe-4S] cluster serves as cofactor.

The enzyme catalyses isopentenyl diphosphate + 2 oxidized [2Fe-2S]-[ferredoxin] + H2O = (2E)-4-hydroxy-3-methylbut-2-enyl diphosphate + 2 reduced [2Fe-2S]-[ferredoxin] + 2 H(+). It carries out the reaction dimethylallyl diphosphate + 2 oxidized [2Fe-2S]-[ferredoxin] + H2O = (2E)-4-hydroxy-3-methylbut-2-enyl diphosphate + 2 reduced [2Fe-2S]-[ferredoxin] + 2 H(+). It functions in the pathway isoprenoid biosynthesis; dimethylallyl diphosphate biosynthesis; dimethylallyl diphosphate from (2E)-4-hydroxy-3-methylbutenyl diphosphate: step 1/1. It participates in isoprenoid biosynthesis; isopentenyl diphosphate biosynthesis via DXP pathway; isopentenyl diphosphate from 1-deoxy-D-xylulose 5-phosphate: step 6/6. Functionally, catalyzes the conversion of 1-hydroxy-2-methyl-2-(E)-butenyl 4-diphosphate (HMBPP) into a mixture of isopentenyl diphosphate (IPP) and dimethylallyl diphosphate (DMAPP). Acts in the terminal step of the DOXP/MEP pathway for isoprenoid precursor biosynthesis. This chain is 4-hydroxy-3-methylbut-2-enyl diphosphate reductase, found in Pseudoalteromonas atlantica (strain T6c / ATCC BAA-1087).